Reading from the N-terminus, the 44-residue chain is Protein PsbN (44 aa).

Residues F6–V26 traverse the membrane as a helical segment.

This sequence belongs to the PsbN family.

The protein resides in the plastid. It localises to the chloroplast thylakoid membrane. Functionally, may play a role in photosystem I and II biogenesis. In Chlorella vulgaris (Green alga), this protein is Protein PsbN.